The following is a 143-amino-acid chain: Heat shock protein Hsp-16.41 (143 aa).

The sHSP domain occupies 35–140 (HNSFNFSDNI…SSRSIPINFV (106 aa)).

This sequence belongs to the small heat shock protein (HSP20) family.

In Caenorhabditis elegans, this protein is Heat shock protein Hsp-16.41 (hsp-16.41).